Here is a 481-residue protein sequence, read N- to C-terminus: Proline--tRNA ligase (481 aa).

It belongs to the class-II aminoacyl-tRNA synthetase family. ProS type 3 subfamily. Homodimer.

The protein localises to the cytoplasm. It carries out the reaction tRNA(Pro) + L-proline + ATP = L-prolyl-tRNA(Pro) + AMP + diphosphate. Its function is as follows. Catalyzes the attachment of proline to tRNA(Pro) in a two-step reaction: proline is first activated by ATP to form Pro-AMP and then transferred to the acceptor end of tRNA(Pro). The chain is Proline--tRNA ligase from Chlorobium luteolum (strain DSM 273 / BCRC 81028 / 2530) (Pelodictyon luteolum).